Reading from the N-terminus, the 171-residue chain is S-ribosylhomocysteine lyase (171 aa).

3 residues coordinate Fe cation: H54, H58, and C128.

The protein belongs to the LuxS family. Homodimer. It depends on Fe cation as a cofactor.

It carries out the reaction S-(5-deoxy-D-ribos-5-yl)-L-homocysteine = (S)-4,5-dihydroxypentane-2,3-dione + L-homocysteine. In terms of biological role, involved in the synthesis of autoinducer 2 (AI-2) which is secreted by bacteria and is used to communicate both the cell density and the metabolic potential of the environment. The regulation of gene expression in response to changes in cell density is called quorum sensing. Catalyzes the transformation of S-ribosylhomocysteine (RHC) to homocysteine (HC) and 4,5-dihydroxy-2,3-pentadione (DPD). This chain is S-ribosylhomocysteine lyase, found in Pectobacterium carotovorum subsp. carotovorum (strain PC1).